Consider the following 302-residue polypeptide: D-alanine--D-alanine ligase (302 aa).

The ATP-grasp domain maps to 99 to 298 (KRLFVAEGIP…FEQLIQRIID (200 aa)). An ATP-binding site is contributed by 128-183 (LAALGSPVVVKPADGGSTVGVTIAREAGHLPEAVRLALQYSPQVLIEQYIPGQEIT). Mg(2+)-binding residues include Asp-252, Glu-265, and Asn-267.

The protein belongs to the D-alanine--D-alanine ligase family. The cofactor is Mg(2+). Mn(2+) serves as cofactor.

It is found in the cytoplasm. It catalyses the reaction 2 D-alanine + ATP = D-alanyl-D-alanine + ADP + phosphate + H(+). Its pathway is cell wall biogenesis; peptidoglycan biosynthesis. Its function is as follows. Cell wall formation. The polypeptide is D-alanine--D-alanine ligase (Gloeobacter violaceus (strain ATCC 29082 / PCC 7421)).